A 144-amino-acid polypeptide reads, in one-letter code: DNA-directed RNA polymerases II and V subunit 6B (144 aa).

The span at 1–32 (MADDDYNEVDDLGYEDEPAEPEIEEGVEEDAD) shows a compositional bias: acidic residues. Positions 1–62 (MADDDYNEVD…EPVQRPRKTS (62 aa)) are disordered. A compositionally biased stretch (basic and acidic residues) spans 46–56 (TEDKVETEPVQ).

It belongs to the archaeal Rpo6/eukaryotic RPB6 RNA polymerase subunit family. As to quaternary structure, component of the RNA polymerase II and V complexes.

It localises to the nucleus. Its function is as follows. DNA-dependent RNA polymerase catalyzes the transcription of DNA into RNA using the four ribonucleoside triphosphates as substrates. Component of RNA polymerase II which synthesizes mRNA precursors and many functional non-coding RNAs. Pol II is the central component of the basal RNA polymerase II transcription machinery. It is composed of mobile elements that move relative to each other. Component of RNA polymerase V which mediates RNA-directed DNA methylation-dependent (RdDM) transcriptional gene silencing (TGS) of endogenous repeated sequences, including transposable elements. This is DNA-directed RNA polymerases II and V subunit 6B (NRPB6B) from Arabidopsis thaliana (Mouse-ear cress).